Here is a 130-residue protein sequence, read N- to C-terminus: Small ribosomal subunit protein uS8 (130 aa).

Belongs to the universal ribosomal protein uS8 family. In terms of assembly, part of the 30S ribosomal subunit.

In terms of biological role, one of the primary rRNA binding proteins, it binds directly to 16S rRNA central domain where it helps coordinate assembly of the platform of the 30S subunit. This chain is Small ribosomal subunit protein uS8, found in Cenarchaeum symbiosum (strain A).